The sequence spans 1995 residues: Myosin-14 (1995 aa).

A disordered region spans residues 1 to 46 (MAAVTMSVPGRKAPPRPGPVPEAAQPFLFTPRGPSAGGGPGSGTSP). At A2 the chain carries N-acetylalanine. One can recognise a Myosin N-terminal SH3-like domain in the interval 51–101 (TARRLVWVPSELHGFEAAALRDEGEEEAEVELAESGRRLRLPRDQIQRMNP). At S60 the chain carries Phosphoserine. In terms of domain architecture, Myosin motor spans 105–800 (SKAEDMAELT…VLAQLEEERD (696 aa)). 198-205 (GESGAGKT) contacts ATP. The actin-binding stretch occupies residues 678–700 (LSRLMATLSNTNPSFVRCIVPNH). Residues 803-832 (VTDIIVSFQAAARGYLARRAFQKRQQQQSA) form the IQ domain. The stretch at 862–1947 (LQVTRQDEVL…VTTLRNRLRR (1086 aa)) forms a coiled coil. T1194 is subject to Phosphothreonine. Disordered stretches follow at residues 1371–1415 (EEAA…RRAA), 1592–1623 (QHER…VERD), 1905–1942 (EAEE…TTLR), and 1958–1995 (RQVF…AHPQ). Residues 1930-1942 (SAESMNREVTTLR) show a composition bias toward polar residues. Phosphoserine is present on residues S1969, S1980, S1983, and S1989. Residues 1981 to 1995 (GPSPEPEGSPPAHPQ) show a composition bias toward pro residues.

This sequence belongs to the TRAFAC class myosin-kinesin ATPase superfamily. Myosin family. In terms of assembly, myosin is a hexameric protein that consists of 2 heavy chain subunits (MHC), 2 alkali light chain subunits (MLC) and 2 regulatory light chain subunits (MLC-2). As to expression, high levels of expression are found in brain (highest in corpus callosum), heart, kidney, liver, lung, small intestine, colon and skeletal muscle. Expression is low in organs composed mainly of smooth muscle, such as aorta, uterus and urinary bladder. No detectable expression is found in thymus, spleen, placenta and lymphocytes.

Functionally, cellular myosin that appears to play a role in cytokinesis, cell shape, and specialized functions such as secretion and capping. The protein is Myosin-14 (MYH14) of Homo sapiens (Human).